The following is a 560-amino-acid chain: Probable pectinesterase/pectinesterase inhibitor 20 (560 aa).

Residues 1 to 24 (MSQKLMFLFTLACLSSLPSPFISA) form the signal peptide. Residues 25–179 (QIPAIGNATS…TKLYGVSLAL (155 aa)) form a pectinesterase inhibitor 20 region. 7 N-linked (GlcNAc...) asparagine glycosylation sites follow: Asn-31, Asn-168, Asn-251, Asn-255, Asn-268, Asn-307, and Asn-314. The interval 246–544 (VTVIQNGTGN…FTVTNFLVGE (299 aa)) is pectinesterase 20. Thr-323 is a substrate binding site. N-linked (GlcNAc...) asparagine glycosylation is present at Asn-340. Gln-353 is a binding site for substrate. Asp-376 functions as the Proton donor; for pectinesterase activity in the catalytic mechanism. Cysteines 390 and 410 form a disulfide. The active-site Nucleophile; for pectinesterase activity is Asp-397. Residues 417 to 441 (PRKGQSNEVTAQGRTDPNQNTGTAI) form a disordered region. Positions 419–439 (KGQSNEVTAQGRTDPNQNTGT) are enriched in polar residues. N-linked (GlcNAc...) asparagine glycosylation is present at Asn-456. Residues Arg-465 and Trp-467 each coordinate substrate. N-linked (GlcNAc...) asparagine glycosylation is found at Asn-507, Asn-528, and Asn-534.

The protein in the N-terminal section; belongs to the PMEI family. This sequence in the C-terminal section; belongs to the pectinesterase family. As to expression, expressed in flower buds.

The protein localises to the secreted. It localises to the cell wall. The enzyme catalyses [(1-&gt;4)-alpha-D-galacturonosyl methyl ester](n) + n H2O = [(1-&gt;4)-alpha-D-galacturonosyl](n) + n methanol + n H(+). It participates in glycan metabolism; pectin degradation; 2-dehydro-3-deoxy-D-gluconate from pectin: step 1/5. In terms of biological role, acts in the modification of cell walls via demethylesterification of cell wall pectin. In Arabidopsis thaliana (Mouse-ear cress), this protein is Probable pectinesterase/pectinesterase inhibitor 20 (PME20).